Reading from the N-terminus, the 109-residue chain is Movement protein (109 aa).

Positions 1–28 (MDSFGRAPPLWPQSALPRVPGAAPSSSG) are disordered. A helical transmembrane segment spans residues 34–54 (VGEIAIFTFVAVLALYLLWSW).

This sequence belongs to the mastrevirus movement protein family. Interacts with the capsid protein (CP). Part of a MP-CP-viral DNA complex.

It localises to the host membrane. In terms of biological role, involved in the viral transport within, and between cells. This is Movement protein from Sugarcane streak virus (isolate South Africa) (SSV).